A 419-amino-acid polypeptide reads, in one-letter code: UDP-N-acetylglucosamine 1-carboxyvinyltransferase (419 aa).

22-23 is a binding site for phosphoenolpyruvate; the sequence is KN. Arg-91 contacts UDP-N-acetyl-alpha-D-glucosamine. Catalysis depends on Cys-115, which acts as the Proton donor. Cys-115 is modified (2-(S-cysteinyl)pyruvic acid O-phosphothioketal). Residues 120 to 124, 160 to 163, Asp-305, and Val-327 each bind UDP-N-acetyl-alpha-D-glucosamine; these read RPVDL and KVSV.

It belongs to the EPSP synthase family. MurA subfamily.

It is found in the cytoplasm. It catalyses the reaction phosphoenolpyruvate + UDP-N-acetyl-alpha-D-glucosamine = UDP-N-acetyl-3-O-(1-carboxyvinyl)-alpha-D-glucosamine + phosphate. It participates in cell wall biogenesis; peptidoglycan biosynthesis. Its function is as follows. Cell wall formation. Adds enolpyruvyl to UDP-N-acetylglucosamine. This Escherichia coli O157:H7 protein is UDP-N-acetylglucosamine 1-carboxyvinyltransferase.